The primary structure comprises 251 residues: Lactose phosphotransferase system repressor (251 aa).

Positions K3 to S58 constitute an HTH deoR-type domain. The segment at residues I20 to D39 is a DNA-binding region (H-T-H motif).

Functionally, repressor of the lactose catabolism operon. Galactose-6-phosphate is the inducer. The polypeptide is Lactose phosphotransferase system repressor (lacR) (Staphylococcus aureus (strain N315)).